A 234-amino-acid polypeptide reads, in one-letter code: Large ribosomal subunit protein uL1 (234 aa).

This sequence belongs to the universal ribosomal protein uL1 family. As to quaternary structure, part of the 50S ribosomal subunit.

Its function is as follows. Binds directly to 23S rRNA. The L1 stalk is quite mobile in the ribosome, and is involved in E site tRNA release. Protein L1 is also a translational repressor protein, it controls the translation of the L11 operon by binding to its mRNA. This Helicobacter hepaticus (strain ATCC 51449 / 3B1) protein is Large ribosomal subunit protein uL1.